The primary structure comprises 656 residues: uncharacterized protein (656 aa).

The segment at 623–656 (EIDIPGTPASIDPEWSRPPGSITDDHVFDAPLHR) is disordered. Positions 645-656 (TDDHVFDAPLHR) are enriched in basic and acidic residues.

This is an uncharacterized protein from Mycobacterium tuberculosis (strain ATCC 25618 / H37Rv).